A 269-amino-acid chain; its full sequence is Hydroxyethylthiazole kinase (269 aa).

Methionine 46 provides a ligand contact to substrate. The ATP site is built by arginine 121 and threonine 166. Glycine 193 lines the substrate pocket.

This sequence belongs to the Thz kinase family. Requires Mg(2+) as cofactor.

The enzyme catalyses 5-(2-hydroxyethyl)-4-methylthiazole + ATP = 4-methyl-5-(2-phosphooxyethyl)-thiazole + ADP + H(+). Its pathway is cofactor biosynthesis; thiamine diphosphate biosynthesis; 4-methyl-5-(2-phosphoethyl)-thiazole from 5-(2-hydroxyethyl)-4-methylthiazole: step 1/1. Functionally, catalyzes the phosphorylation of the hydroxyl group of 4-methyl-5-beta-hydroxyethylthiazole (THZ). This chain is Hydroxyethylthiazole kinase, found in Limosilactobacillus reuteri (strain DSM 20016) (Lactobacillus reuteri).